Reading from the N-terminus, the 222-residue chain is Transmembrane protein 114 (222 aa).

The chain crosses the membrane as a helical span at residues 7–27 (ALAGAAALSGALSFVLLAAAI). 2 N-linked (GlcNAc...) asparagine glycosylation sites follow: N54 and N88. 3 helical membrane-spanning segments follow: residues 105–125 (FVIL…TGFL), 133–153 (LLLL…LTGI), and 188–208 (LALG…FLAA).

The protein resides in the cell junction. The protein localises to the tight junction. It is found in the lateral cell membrane. It localises to the apical cell membrane. The sequence is that of Transmembrane protein 114 from Mus musculus (Mouse).